A 90-amino-acid chain; its full sequence is Cell division topological specificity factor (90 aa).

Residues M1–A21 form a disordered region. Basic and acidic residues predominate over residues S10 to A21.

Belongs to the MinE family.

Prevents the cell division inhibition by proteins MinC and MinD at internal division sites while permitting inhibition at polar sites. This ensures cell division at the proper site by restricting the formation of a division septum at the midpoint of the long axis of the cell. The polypeptide is Cell division topological specificity factor (Acinetobacter baumannii (strain AB307-0294)).